Reading from the N-terminus, the 979-residue chain is MEEDKYQLVLHNDDLERMVLYDPNSKSLLVRNSTDMLRQKSKQLVLQQQIESPYSPMPSLRSPSIPTTPTLVGGLSSQSHNNNHPSTLHIMCPYCKRSYNNNNNNNINNNISTNNNNINNNSSNNLNNLNNNINNINNGIFNNNNNNNSNSNNNNISGGNNNTMDINGNSIVSGVIAPFNPSPYYRSPISEPPFISRDYFLLLQDSSKSGVNNNNNNNNNDSTTTNNNNNNNTTPPQQQQQQNSSGLNSEFLNIGYYKKFFKEDIKIGSGGFGSVYLCRHLINGVDLGEFAVKKVPVGENLPWLFRVLREVKALETLTKHRNIINYKHSWLEYDQPADFGPKVPCLYILMEYANNGNLQDYMAEKRDLIPENEIWSFFIDLCHGIGYLHHSGIIHRDIKPPNILIHQSYDSITDREVTHLMISDFGTCDTIGPLESLAPPLYKNNIKRTGNTGTIEYLAPELLQKGVNGEYNSDYDEKCDIWSLGILLYQMAYGTLPYRYSGDPFIDEDPNRNLPSLIDEIAGFSNNRLIFPQIPQRSRDLKDMITILLRAKPHERPTISQILSTHFIQSKTKHYTINPIHLPFTKRNKFKNTSVHNTTASTIKLRRKGSISTTNSTTSSSSSTATSSSLSSTTIATTSSSNAINNTTATTTTNSNLGNNNNNNTNALISSRISPIRKTQLVEENSEDSSNEIANINPNRSLIQPIVLSDTDNDDIIIDDDDDDDDSTNNNDTNNTDNTDDEMNSGDVVGIVNNKKSSYSRSSSIRSPSSSNKLRQRTISNSGGNNGIRKALPSLEAPRSGRFKRAAIVIQRGVRSSAVYQAFYMLQALFQVWLCFDQCSTCPNTFPSPILLYPLLLLSLIPILVVNNNNNSNNMNNNNNNNNINSNGQLAHLNGSGGGGIINNGNRDTKKINTIISIIRFIYYFVISVLLPKEISCKSTSHIIPILPPIADYVVFPLLSLFKNLTLLIINLIFIFYRD.

Residues asparagine 32, asparagine 110, asparagine 120, asparagine 121, asparagine 147, asparagine 155, asparagine 161, asparagine 220, asparagine 231, and asparagine 243 are each glycosylated (N-linked (GlcNAc...) asparagine). Residues 207-245 (SKSGVNNNNNNNNNDSTTTNNNNNNNTTPPQQQQQQNSS) form a disordered region. Positions 212–244 (NNNNNNNNNDSTTTNNNNNNNTTPPQQQQQQNS) are enriched in low complexity. The region spanning 261–568 (FKEDIKIGSG…ISQILSTHFI (308 aa)) is the Protein kinase domain. ATP contacts are provided by residues 267 to 275 (IGSGGFGSV) and lysine 293. The Proton acceptor role is filled by aspartate 397. Residues asparagine 592, asparagine 597, asparagine 615, asparagine 645, asparagine 646, asparagine 663, and asparagine 699 are each glycosylated (N-linked (GlcNAc...) asparagine). A compositionally biased stretch (polar residues) spans 593-602 (TSVHNTTAST). Residues 593–666 (TSVHNTTAST…LGNNNNNNTN (74 aa)) are disordered. A compositionally biased stretch (low complexity) spans 610–666 (SISTTNSTTSSSSSTATSSSLSSTTIATTSSSNAINNTTATTTTNSNLGNNNNNNTN). Residues 713 to 727 (NDDIIIDDDDDDDDS) are compositionally biased toward acidic residues. A disordered region spans residues 713-793 (NDDIIIDDDD…GNNGIRKALP (81 aa)). 2 stretches are compositionally biased toward low complexity: residues 728–737 (TNNNDTNNTD) and 753–773 (NNKK…SSNK). N-linked (GlcNAc...) asparagine glycosylation is found at asparagine 731 and asparagine 734. Residues 846-866 (FPSPILLYPLLLLSLIPILVV) traverse the membrane as a helical segment. Residues asparagine 870 and asparagine 894 are each glycosylated (N-linked (GlcNAc...) asparagine). Helical transmembrane passes span 912–932 (INTI…VLLP) and 956–976 (FPLL…IFIF).

The protein belongs to the protein kinase superfamily. Ser/Thr protein kinase family.

It localises to the membrane. The enzyme catalyses L-seryl-[protein] + ATP = O-phospho-L-seryl-[protein] + ADP + H(+). It catalyses the reaction L-threonyl-[protein] + ATP = O-phospho-L-threonyl-[protein] + ADP + H(+). The chain is Probable serine/threonine-protein kinase iksA (iksA) from Dictyostelium discoideum (Social amoeba).